Consider the following 373-residue polypeptide: Chaperone protein DnaJ (373 aa).

The J domain occupies 4-69; the sequence is NYYEILEISQ…EKRSIYDRYG (66 aa). The CR-type zinc-finger motif lies at 133 to 210; it reads GCKKKIDFSY…CHGNGYEEIK (78 aa). Zn(2+) contacts are provided by Cys-146, Cys-149, Cys-162, Cys-165, Cys-184, Cys-187, Cys-198, and Cys-201. 4 CXXCXGXG motif repeats span residues 146 to 153, 162 to 169, 184 to 191, and 198 to 205; these read CKSCKGSG, CPHCGGKG, CDHCKGSG, and CKTCHGNG.

This sequence belongs to the DnaJ family. Homodimer. The cofactor is Zn(2+).

The protein localises to the cytoplasm. In terms of biological role, participates actively in the response to hyperosmotic and heat shock by preventing the aggregation of stress-denatured proteins and by disaggregating proteins, also in an autonomous, DnaK-independent fashion. Unfolded proteins bind initially to DnaJ; upon interaction with the DnaJ-bound protein, DnaK hydrolyzes its bound ATP, resulting in the formation of a stable complex. GrpE releases ADP from DnaK; ATP binding to DnaK triggers the release of the substrate protein, thus completing the reaction cycle. Several rounds of ATP-dependent interactions between DnaJ, DnaK and GrpE are required for fully efficient folding. Also involved, together with DnaK and GrpE, in the DNA replication of plasmids through activation of initiation proteins. The sequence is that of Chaperone protein DnaJ from Campylobacter lari (strain RM2100 / D67 / ATCC BAA-1060).